A 450-amino-acid polypeptide reads, in one-letter code: Hydrolase ffsE (450 aa).

Catalysis depends on Ser266, which acts as the Nucleophile.

Belongs to the AB hydrolase superfamily. FUS2 hydrolase family. As to quaternary structure, homodimer.

It participates in mycotoxin biosynthesis. Hydrolase; part of the gene cluster that mediates the biosynthesis of the cytotoxic leucine-containing cytochalasans, including aspochalasin C, aspochalasin E, TMC-169, flavichalasine F, aspergillin PZ, aspochalasin M and flavichalasine G. The first step in the pathway is catalyzed by the hybrid PKS-NRPS ffsA that utilizes 8 units of malonyl-CoA to iteratively assemble the octaketide chain before addition of L-leucine by the C-terminal NRPS modules. Because ffsA lacks a designated enoylreductase (ER) domain, the required activity is provided the enoyl reductase fssC. The methyltransferase (MT) domain of ffsA catalyzes the alpha-methylation at C10 and C14 using S-adenosyl-L-methionine as the methyl-donating cosubstrate. Reduction by the hydrolyase ffsE, followed by dehydration and intra-molecular Diels-Alder cyclization by the Diels-Alderase ffsF then yield the required isoindolone-fused macrocycle. A number of oxidative steps catalyzed by the tailoring cytochrome P450 monooxygenase ffsD, the FAD-linked oxidoreductase ffsJ and the short-chain dehydrogenase/reductase ffsI, are further required to afford the final products. The chain is Hydrolase ffsE from Aspergillus flavipes.